A 215-amino-acid polypeptide reads, in one-letter code: Leucyl/phenylalanyl-tRNA--protein transferase (215 aa).

The protein belongs to the L/F-transferase family.

Its subcellular location is the cytoplasm. The enzyme catalyses N-terminal L-lysyl-[protein] + L-leucyl-tRNA(Leu) = N-terminal L-leucyl-L-lysyl-[protein] + tRNA(Leu) + H(+). The catalysed reaction is N-terminal L-arginyl-[protein] + L-leucyl-tRNA(Leu) = N-terminal L-leucyl-L-arginyl-[protein] + tRNA(Leu) + H(+). It carries out the reaction L-phenylalanyl-tRNA(Phe) + an N-terminal L-alpha-aminoacyl-[protein] = an N-terminal L-phenylalanyl-L-alpha-aminoacyl-[protein] + tRNA(Phe). Functions in the N-end rule pathway of protein degradation where it conjugates Leu, Phe and, less efficiently, Met from aminoacyl-tRNAs to the N-termini of proteins containing an N-terminal arginine or lysine. The sequence is that of Leucyl/phenylalanyl-tRNA--protein transferase from Campylobacter jejuni subsp. doylei (strain ATCC BAA-1458 / RM4099 / 269.97).